Reading from the N-terminus, the 374-residue chain is Acetylxylan esterase (374 aa).

The first 22 residues, 1–22 (MVFSPRLSAFVALVALTNAATA), serve as a signal peptide directing secretion. One can recognise a CBM1 domain in the interval 23–57 (VPMYGQCGGSGYTGPTQCDPGLVCVKLNDWYSQCQ). Residues 58–99 (SGGAQPPVTTTSSPPVTVSPPPSTTTVAPPVATGPPAPEIPA) are ser/Thr/Pro-rich linker. The interval 60–86 (GAQPPVTTTSSPPVTVSPPPSTTTVAP) is disordered. Residues 63–73 (PPVTTTSSPPV) are compositionally biased toward low complexity. Residues 100-374 (GQLTQLRSFG…EVVAMDFFGL (275 aa)) form a catalytic region. N-linked (GlcNAc...) asparagine glycosylation occurs at Asn114. Ser219 (charge relay system) is an active-site residue. An N-linked (GlcNAc...) asparagine glycan is attached at Asn320.

Belongs to the carbohydrate esterase 1 (CE1) family. AxeA subfamily. In terms of assembly, monomer. Glycosylated.

It is found in the secreted. The catalysed reaction is Deacetylation of xylans and xylo-oligosaccharides.. It participates in glycan degradation; xylan degradation. Functionally, acetylxylan esterase involved in the hydrolysis of xylan, a major structural heterogeneous polysaccharide found in plant biomass representing the second most abundant polysaccharide in the biosphere, after cellulose. Degrades acetylated xylans by cleaving acetyl side groups from the hetero-xylan backbone. This Coprinopsis cinerea (strain Okayama-7 / 130 / ATCC MYA-4618 / FGSC 9003) (Inky cap fungus) protein is Acetylxylan esterase.